Consider the following 121-residue polypeptide: Large ribosomal subunit protein uL22 (121 aa).

This sequence belongs to the universal ribosomal protein uL22 family. In terms of assembly, part of the 50S ribosomal subunit.

Its function is as follows. This protein binds specifically to 23S rRNA; its binding is stimulated by other ribosomal proteins, e.g. L4, L17, and L20. It is important during the early stages of 50S assembly. It makes multiple contacts with different domains of the 23S rRNA in the assembled 50S subunit and ribosome. The globular domain of the protein is located near the polypeptide exit tunnel on the outside of the subunit, while an extended beta-hairpin is found that lines the wall of the exit tunnel in the center of the 70S ribosome. The protein is Large ribosomal subunit protein uL22 of Paenarthrobacter aurescens (strain TC1).